The sequence spans 372 residues: tRNA-specific 2-thiouridylase MnmA (372 aa).

ATP is bound by residues 9-16 (GMSGGVDS) and Met-35. The interval 95–97 (NPD) is interaction with target base in tRNA. Cys-100 acts as the Nucleophile in catalysis. Cys-100 and Cys-201 are disulfide-bonded. Gly-124 contributes to the ATP binding site. The interaction with tRNA stretch occupies residues 151–153 (KDQ). The Cysteine persulfide intermediate role is filled by Cys-201. The segment at 317–318 (RY) is interaction with tRNA.

The protein belongs to the MnmA/TRMU family.

The protein resides in the cytoplasm. It catalyses the reaction S-sulfanyl-L-cysteinyl-[protein] + uridine(34) in tRNA + AH2 + ATP = 2-thiouridine(34) in tRNA + L-cysteinyl-[protein] + A + AMP + diphosphate + H(+). In terms of biological role, catalyzes the 2-thiolation of uridine at the wobble position (U34) of tRNA, leading to the formation of s(2)U34. The sequence is that of tRNA-specific 2-thiouridylase MnmA from Herminiimonas arsenicoxydans.